A 473-amino-acid chain; its full sequence is Photosystem II CP43 reaction center protein (473 aa).

Positions 1-14 (MKNLYSLRRFYHVE) are excised as a propeptide. Thr-15 is subject to N-acetylthreonine. The residue at position 15 (Thr-15) is a Phosphothreonine. Helical transmembrane passes span 69–93 (LFEVAHFVPEKPMYEQGLILLPHLA), 134–155 (LIGPETLEESFPFFGYVWKDKN), 178–200 (KARYLGGVYDTWAPGGGDVRVIT), 255–275 (KPFGWARRAFVWSGEAYLSYS), and 291–312 (WFNNTVYPSEFYGPTGPEASQA). Glu-367 lines the [CaMn4O5] cluster pocket. A helical transmembrane segment spans residues 447 to 471 (RARAAAAGFEKGIDRDTEPTLFMRP).

Belongs to the PsbB/PsbC family. PsbC subfamily. PSII is composed of 1 copy each of membrane proteins PsbA, PsbB, PsbC, PsbD, PsbE, PsbF, PsbH, PsbI, PsbJ, PsbK, PsbL, PsbM, PsbT, PsbX, PsbY, PsbZ, Psb30/Ycf12, at least 3 peripheral proteins of the oxygen-evolving complex and a large number of cofactors. It forms dimeric complexes. It depends on Binds multiple chlorophylls and provides some of the ligands for the Ca-4Mn-5O cluster of the oxygen-evolving complex. It may also provide a ligand for a Cl- that is required for oxygen evolution. PSII binds additional chlorophylls, carotenoids and specific lipids. as a cofactor.

It is found in the plastid. It localises to the chloroplast thylakoid membrane. In terms of biological role, one of the components of the core complex of photosystem II (PSII). It binds chlorophyll and helps catalyze the primary light-induced photochemical processes of PSII. PSII is a light-driven water:plastoquinone oxidoreductase, using light energy to abstract electrons from H(2)O, generating O(2) and a proton gradient subsequently used for ATP formation. This chain is Photosystem II CP43 reaction center protein, found in Nephroselmis olivacea (Green alga).